We begin with the raw amino-acid sequence, 152 residues long: Xanthine-guanine phosphoribosyltransferase (152 aa).

5-phospho-alpha-D-ribose 1-diphosphate is bound by residues 37 to 38 (RG), Arg-69, and 88 to 96 (DDLVDTGGT). Position 69 (Arg-69) interacts with GMP. Asp-89 provides a ligand contact to Mg(2+). Residues Asp-92 and Ile-135 each contribute to the guanine site. Xanthine contacts are provided by Asp-92 and Ile-135. Residues 92–96 (DTGGT) and 134–135 (WI) contribute to the GMP site.

This sequence belongs to the purine/pyrimidine phosphoribosyltransferase family. XGPT subfamily. Homotetramer. Mg(2+) serves as cofactor.

It is found in the cell inner membrane. It catalyses the reaction GMP + diphosphate = guanine + 5-phospho-alpha-D-ribose 1-diphosphate. It carries out the reaction XMP + diphosphate = xanthine + 5-phospho-alpha-D-ribose 1-diphosphate. The catalysed reaction is IMP + diphosphate = hypoxanthine + 5-phospho-alpha-D-ribose 1-diphosphate. It participates in purine metabolism; GMP biosynthesis via salvage pathway; GMP from guanine: step 1/1. Its pathway is purine metabolism; XMP biosynthesis via salvage pathway; XMP from xanthine: step 1/1. Purine salvage pathway enzyme that catalyzes the transfer of the ribosyl-5-phosphate group from 5-phospho-alpha-D-ribose 1-diphosphate (PRPP) to the N9 position of the 6-oxopurines guanine and xanthine to form the corresponding ribonucleotides GMP (guanosine 5'-monophosphate) and XMP (xanthosine 5'-monophosphate), with the release of PPi. To a lesser extent, also acts on hypoxanthine. In Citrobacter koseri (strain ATCC BAA-895 / CDC 4225-83 / SGSC4696), this protein is Xanthine-guanine phosphoribosyltransferase.